The chain runs to 252 residues: MFS-type transporter cctQ (252 aa).

Transmembrane regions (helical) follow at residues 54 to 74 (IGSLMPLVYTTVAFFVAVVLP) and 116 to 136 (FGSFWVQSAVGTIPLFGIVGF). The N-linked (GlcNAc...) asparagine glycan is linked to N179. 2 helical membrane passes run 180–200 (FSICLAQIVVLLMINTVWILA) and 208–228 (FLVWFLLLGGACALLAMYFTT).

It belongs to the major facilitator superfamily.

It localises to the membrane. The protein operates within mycotoxin biosynthesis. Functionally, MFS-type transporter; part of the gene cluster that mediates the biosynthesis of the mycotoxin cyclochlorotine, a hepatotoxic and carcinogenic cyclic chlorinated pentapeptide. Most likely responsible for cyclochlorotine secretion and thereby may contribute to intrinsic resistance. The chain is MFS-type transporter cctQ from Talaromyces islandicus (Penicillium islandicum).